The sequence spans 256 residues: Nuclear shuttle protein (256 aa).

Residues 1–16 (MYSTSNRRGRSQTQRG) are compositionally biased toward polar residues. Residues 1–46 (MYSTSNRRGRSQTQRGSHVRRTGVKRSYGAARGDDRRRPNVVSKTQ) are disordered. The short motif at 21–42 (RTGVKRSYGAARGDDRRRPNVV) is the Bipartite nuclear localization signal element. The short motif at 81–96 (SYVKTVPNRTRTYIKL) is the Nuclear localization signal element. Positions 150 to 187 (ELFGARIHCHGNLSVVPALKDRYYIRHVTKRVVSLEKD) are interaction with Arabidopsis thaliana NSI protein. Positions 177–198 (VTKRVVSLEKDTLLIDLHGTTQ) match the Nuclear export signal motif.

It belongs to the begomovirus nuclear shuttle protein family. In terms of assembly, binds to single-stranded and double-stranded viral DNA. Interacts with the host nuclear shuttle interacting (NSI) protein. This interaction may allow NSP to recruit NSI monomers to the viral genome and thus regulate nuclear export of viral genome by NSP.

Its subcellular location is the host nucleus. It localises to the host cytoplasm. The protein localises to the host cell membrane. In terms of biological role, binds to the genomic viral ssDNA, shuttles it into and out of the cell nucleus. Begomoviruses use 2 proteins to transport their DNA from cell to cell. The nuclear shuttle protein (NSP) shuttles it between nucleus and cytoplasm and the movement protein (MP) probably transports the DNA-NSP complex to the cell periphery and facilitates movement across the cell wall. The polypeptide is Nuclear shuttle protein (Squash leaf curl virus (SLCV)).